The primary structure comprises 101 residues: Large ribosomal subunit protein uL23 (101 aa).

This sequence belongs to the universal ribosomal protein uL23 family. As to quaternary structure, part of the 50S ribosomal subunit. Contacts protein L29, and trigger factor when it is bound to the ribosome.

Functionally, one of the early assembly proteins it binds 23S rRNA. One of the proteins that surrounds the polypeptide exit tunnel on the outside of the ribosome. Forms the main docking site for trigger factor binding to the ribosome. This is Large ribosomal subunit protein uL23 from Histophilus somni (strain 129Pt) (Haemophilus somnus).